The sequence spans 162 residues: Transcription elongation factor GreA (162 aa).

A coiled-coil region spans residues 44 to 72 (ENAEYHAAKEKQSHIERRIAELSDILSRA).

This sequence belongs to the GreA/GreB family.

Necessary for efficient RNA polymerase transcription elongation past template-encoded arresting sites. The arresting sites in DNA have the property of trapping a certain fraction of elongating RNA polymerases that pass through, resulting in locked ternary complexes. Cleavage of the nascent transcript by cleavage factors such as GreA or GreB allows the resumption of elongation from the new 3'terminus. GreA releases sequences of 2 to 3 nucleotides. This is Transcription elongation factor GreA from Nautilia profundicola (strain ATCC BAA-1463 / DSM 18972 / AmH).